The primary structure comprises 156 residues: SsrA-binding protein (156 aa).

This sequence belongs to the SmpB family.

The protein resides in the cytoplasm. In terms of biological role, required for rescue of stalled ribosomes mediated by trans-translation. Binds to transfer-messenger RNA (tmRNA), required for stable association of tmRNA with ribosomes. tmRNA and SmpB together mimic tRNA shape, replacing the anticodon stem-loop with SmpB. tmRNA is encoded by the ssrA gene; the 2 termini fold to resemble tRNA(Ala) and it encodes a 'tag peptide', a short internal open reading frame. During trans-translation Ala-aminoacylated tmRNA acts like a tRNA, entering the A-site of stalled ribosomes, displacing the stalled mRNA. The ribosome then switches to translate the ORF on the tmRNA; the nascent peptide is terminated with the 'tag peptide' encoded by the tmRNA and targeted for degradation. The ribosome is freed to recommence translation, which seems to be the essential function of trans-translation. The protein is SsrA-binding protein of Clostridium beijerinckii (strain ATCC 51743 / NCIMB 8052) (Clostridium acetobutylicum).